A 205-amino-acid chain; its full sequence is DNA-directed RNA polymerases IV and V subunit 4 (205 aa).

The segment at 1-79 (MSEKGGKGLK…TKSSKNSLHS (79 aa)) is disordered. Polar residues predominate over residues 48-60 (NVSSDQQPFQSSA).

This sequence belongs to the eukaryotic RPB4 RNA polymerase subunit family. As to quaternary structure, component of the RNA polymerase IV and V complexes. Interacts with NRPD1 and NRPE1. Expressed in shoot meristematic region and in root tips. Detected in cotyledons, flowers and young leaves.

It localises to the nucleus. Its function is as follows. DNA-dependent RNA polymerase catalyzes the transcription of DNA into RNA using the four ribonucleoside triphosphates as substrates. Component of RNA polymerases IV and V which mediate short-interfering RNAs (siRNA) accumulation and subsequent RNA-directed DNA methylation-dependent (RdDM) transcriptional gene silencing (TGS) of endogenous repeated sequences, including transposable elements. Required for the de novo DNA methylation directed by the RdDM pathway. In Arabidopsis thaliana (Mouse-ear cress), this protein is DNA-directed RNA polymerases IV and V subunit 4 (NRPD4).